A 294-amino-acid chain; its full sequence is Protoheme IX farnesyltransferase (294 aa).

8 helical membrane passes run 19-39 (PKQT…AGGM), 41-61 (LDAL…TTSV), 89-109 (VEAL…SYLI), 111-131 (PWTA…YTMW), 138-158 (LSII…WAAA), 166-186 (AIMI…YISI), 218-238 (VLMI…PIFL), and 272-292 (SPVE…RILW).

The protein belongs to the UbiA prenyltransferase family. Protoheme IX farnesyltransferase subfamily.

The protein localises to the cell membrane. It catalyses the reaction heme b + (2E,6E)-farnesyl diphosphate + H2O = Fe(II)-heme o + diphosphate. It functions in the pathway porphyrin-containing compound metabolism; heme O biosynthesis; heme O from protoheme: step 1/1. Its function is as follows. Converts heme B (protoheme IX) to heme O by substitution of the vinyl group on carbon 2 of heme B porphyrin ring with a hydroxyethyl farnesyl side group. This chain is Protoheme IX farnesyltransferase, found in Korarchaeum cryptofilum (strain OPF8).